Consider the following 466-residue polypeptide: Heat stress transcription factor A-5 (466 aa).

Residues 21 to 115 (PAPFLVKTYE…LLKNIHRRKP (95 aa)) mediate DNA binding. The segment at 125 to 191 (SSTDQERAVL…KLLNFLETAI (67 aa)) is hydrophobic repeat HR-A/B. Positions 198 to 217 (KNFGKKVEQLDISAYNKKRR) match the Bipartite nuclear localization signal motif. Disordered regions lie at residues 215–248 (KRRL…GNIF), 272–300 (HSIQ…LTKR), and 422–466 (TERP…QLTL). The segment covering 218-233 (LPEVEQSKPPSEDSHL) has biased composition (basic and acidic residues). The short motif at 414–423 (DVFWEQFLTE) is the AHA element. 2 stretches are compositionally biased toward polar residues: residues 425 to 438 (PGSS…STYR) and 455 to 466 (LRNTKNIEQLTL). The Nuclear export signal signature appears at 461 to 466 (IEQLTL).

The protein belongs to the HSF family. Class A subfamily. As to quaternary structure, homotrimer. Exhibits temperature-dependent phosphorylation.

The protein resides in the cytoplasm. It localises to the nucleus. Transcriptional activator that specifically binds DNA sequence 5'-AGAAnnTTCT-3' known as heat shock promoter elements (HSE). The sequence is that of Heat stress transcription factor A-5 (HSFA5) from Arabidopsis thaliana (Mouse-ear cress).